We begin with the raw amino-acid sequence, 255 residues long: MPTDIFSFKQFDIDQTGCAMRVGTDGVLLGAWAGEDAAGSIPQHCLDIGTGTGLIALMLAQRFPQARVQGIEIDPIAAECARANAAASPFSDRIVIASGDILDSSLESLIGNQRFDLIVSNPPFFKSSMHAPDRQRTMARHEETLPLEKLICRASELLSPQGRLALITPRDRLKDLRLYAATYRLVSSRLTEVRTLPHKEPKRLLSEWRPADTAIDRSPFTDTLIIHPATGYYSPEYVRLTEPFYTTSFRILAVG.

Belongs to the methyltransferase superfamily. tRNA (adenine-N(6)-)-methyltransferase family.

It localises to the cytoplasm. The catalysed reaction is adenosine(37) in tRNA1(Val) + S-adenosyl-L-methionine = N(6)-methyladenosine(37) in tRNA1(Val) + S-adenosyl-L-homocysteine + H(+). Specifically methylates the adenine in position 37 of tRNA(1)(Val) (anticodon cmo5UAC). This chain is tRNA1(Val) (adenine(37)-N6)-methyltransferase, found in Porphyromonas gingivalis (strain ATCC BAA-308 / W83).